The primary structure comprises 410 residues: Elongation factor Tu, apicoplast (410 aa).

In terms of domain architecture, tr-type G spans 10–214 (KQHINLGTIG…QIIDNIIIPT (205 aa)). A G1 region spans residues 19 to 26 (GHVDHGKT). GTP is bound at residue 19–26 (GHVDHGKT). Residue Thr-26 coordinates Mg(2+). The tract at residues 60–64 (GITIN) is G2. Residues 81 to 84 (DCPG) form a G3 region. GTP is bound by residues 81-85 (DCPGH) and 136-139 (NKED). The interval 136–139 (NKED) is G4. A G5 region spans residues 174–176 (SAL).

The protein belongs to the TRAFAC class translation factor GTPase superfamily. Classic translation factor GTPase family. EF-Tu/EF-1A subfamily.

The protein localises to the plastid. The protein resides in the apicoplast. It carries out the reaction GTP + H2O = GDP + phosphate + H(+). In terms of biological role, GTP hydrolase that promotes the GTP-dependent binding of aminoacyl-tRNA to the A-site of ribosomes during protein biosynthesis. This is Elongation factor Tu, apicoplast (tufA) from Plasmodium falciparum (isolate 3D7).